A 478-amino-acid polypeptide reads, in one-letter code: Allene oxide synthase 2 (478 aa).

K88, H119, and K123 together coordinate heme b. N278 serves as a coordination point for (13S)-hydroperoxy-(9Z,11E,15Z)-octadecatrienoate. The heme b site is built by K427 and C429.

The protein belongs to the cytochrome P450 family. It depends on heme b as a cofactor. In terms of tissue distribution, weakly expressed in roots, shoots, leaves and flowers.

The enzyme catalyses (13S)-hydroperoxy-(9Z,11E,15Z)-octadecatrienoate = (9Z,13S,15Z)-12,13-epoxyoctadeca-9,11,15-trienoate + H2O. Its pathway is lipid metabolism; oxylipin biosynthesis. In terms of biological role, involved in the biosynthesis of jasmonic acid, a growth regulator that is implicated also as a signaling molecule in plant defense. Converts 13-hydroperoxylinolenic acid to 12,13-epoxylinolenic acid. This is Allene oxide synthase 2 (CYP74A2) from Oryza sativa subsp. japonica (Rice).